We begin with the raw amino-acid sequence, 193 residues long: Superoxide dismutase [Fe] (193 aa).

Fe cation is bound by residues His-27, His-75, Asp-159, and His-163.

Belongs to the iron/manganese superoxide dismutase family. Homodimer. Requires Fe cation as cofactor.

The catalysed reaction is 2 superoxide + 2 H(+) = H2O2 + O2. Destroys superoxide anion radicals which are normally produced within the cells and which are toxic to biological systems. This is Superoxide dismutase [Fe] (sodB) from Bacteroides fragilis (strain YCH46).